A 438-amino-acid chain; its full sequence is ATP-dependent RNA helicase RhlB (438 aa).

The short motif at 9-37 is the Q motif element; it reads QRFADLPLHPEVKQALAENGFEFCTPIQA. In terms of domain architecture, Helicase ATP-binding spans 40–219; that stretch reads LPVLLQSKDI…YDHMNEPVKV (180 aa). 53–60 lines the ATP pocket; the sequence is AQTGTGKT. The DEAD box motif lies at 165–168; it reads DEAD. Residues 243-390 form the Helicase C-terminal domain; sequence KMRLLLTLIE…VSNYDSEALL (148 aa). The segment at 395 to 438 is disordered; sequence TPAKIHRKHPSGTRNLRDRSGASRPGAQRSGARPPRHDRTRRHS. Over residues 428–438 the composition is skewed to basic residues; that stretch reads PPRHDRTRRHS.

Belongs to the DEAD box helicase family. RhlB subfamily. As to quaternary structure, component of the RNA degradosome, which is a multiprotein complex involved in RNA processing and mRNA degradation.

It localises to the cytoplasm. The enzyme catalyses ATP + H2O = ADP + phosphate + H(+). Functionally, DEAD-box RNA helicase involved in RNA degradation. Has RNA-dependent ATPase activity and unwinds double-stranded RNA. This chain is ATP-dependent RNA helicase RhlB, found in Shewanella baltica (strain OS185).